Reading from the N-terminus, the 114-residue chain is Ig heavy chain V region GOM (114 aa).

The Ig-like domain occupies 1–112 (EVQLVESGGD…YWGQGTLVTV (112 aa)).

The sequence is that of Ig heavy chain V region GOM from Canis lupus familiaris (Dog).